A 509-amino-acid polypeptide reads, in one-letter code: Cobyric acid synthase (509 aa).

Residues 262-459 (EIKVGIIKLP…IHGIFENDSW (198 aa)) form the GATase cobBQ-type domain. C343 functions as the Nucleophile in the catalytic mechanism. H451 is a catalytic residue.

The protein belongs to the CobB/CobQ family. CobQ subfamily.

The protein operates within cofactor biosynthesis; adenosylcobalamin biosynthesis. In terms of biological role, catalyzes amidations at positions B, D, E, and G on adenosylcobyrinic A,C-diamide. NH(2) groups are provided by glutamine, and one molecule of ATP is hydrogenolyzed for each amidation. The chain is Cobyric acid synthase from Prochlorococcus marinus (strain MIT 9215).